We begin with the raw amino-acid sequence, 329 residues long: Biotin synthase (329 aa).

One can recognise a Radical SAM core domain in the interval 48–278 (FVGDKVFLCS…TKRISICGGR (231 aa)). 3 residues coordinate [4Fe-4S] cluster: Cys-66, Cys-70, and Cys-73. Residues Ser-143 and Cys-203 each contribute to the [2Fe-2S] cluster site.

This sequence belongs to the radical SAM superfamily. Biotin synthase family. In terms of assembly, homodimer. It depends on [4Fe-4S] cluster as a cofactor. Requires [2Fe-2S] cluster as cofactor.

It carries out the reaction (4R,5S)-dethiobiotin + (sulfur carrier)-SH + 2 reduced [2Fe-2S]-[ferredoxin] + 2 S-adenosyl-L-methionine = (sulfur carrier)-H + biotin + 2 5'-deoxyadenosine + 2 L-methionine + 2 oxidized [2Fe-2S]-[ferredoxin]. It functions in the pathway cofactor biosynthesis; biotin biosynthesis; biotin from 7,8-diaminononanoate: step 2/2. Functionally, catalyzes the conversion of dethiobiotin (DTB) to biotin by the insertion of a sulfur atom into dethiobiotin via a radical-based mechanism. The protein is Biotin synthase of Geotalea daltonii (strain DSM 22248 / JCM 15807 / FRC-32) (Geobacter daltonii).